Here is a 161-residue protein sequence, read N- to C-terminus: ATP synthase subunit b (161 aa).

A helical transmembrane segment spans residues 10 to 29 (AVVQLLNFLFLLWILNKLLY).

This sequence belongs to the ATPase B chain family. As to quaternary structure, F-type ATPases have 2 components, F(1) - the catalytic core - and F(0) - the membrane proton channel. F(1) has five subunits: alpha(3), beta(3), gamma(1), delta(1), epsilon(1). F(0) has three main subunits: a(1), b(2) and c(10-14). The alpha and beta chains form an alternating ring which encloses part of the gamma chain. F(1) is attached to F(0) by a central stalk formed by the gamma and epsilon chains, while a peripheral stalk is formed by the delta and b chains.

It is found in the cell inner membrane. Functionally, f(1)F(0) ATP synthase produces ATP from ADP in the presence of a proton or sodium gradient. F-type ATPases consist of two structural domains, F(1) containing the extramembraneous catalytic core and F(0) containing the membrane proton channel, linked together by a central stalk and a peripheral stalk. During catalysis, ATP synthesis in the catalytic domain of F(1) is coupled via a rotary mechanism of the central stalk subunits to proton translocation. In terms of biological role, component of the F(0) channel, it forms part of the peripheral stalk, linking F(1) to F(0). This chain is ATP synthase subunit b, found in Fervidobacterium nodosum (strain ATCC 35602 / DSM 5306 / Rt17-B1).